Reading from the N-terminus, the 1270-residue chain is DNA-directed RNA polymerase subunit beta (1270 aa).

The protein belongs to the RNA polymerase beta chain family. As to quaternary structure, the RNAP catalytic core consists of 2 alpha, 1 beta, 1 beta' and 1 omega subunit. When a sigma factor is associated with the core the holoenzyme is formed, which can initiate transcription.

It carries out the reaction RNA(n) + a ribonucleoside 5'-triphosphate = RNA(n+1) + diphosphate. In terms of biological role, DNA-dependent RNA polymerase catalyzes the transcription of DNA into RNA using the four ribonucleoside triphosphates as substrates. The chain is DNA-directed RNA polymerase subunit beta from Bacteroides thetaiotaomicron (strain ATCC 29148 / DSM 2079 / JCM 5827 / CCUG 10774 / NCTC 10582 / VPI-5482 / E50).